We begin with the raw amino-acid sequence, 359 residues long: UDP-N-acetylglucosamine--N-acetylmuramyl-(pentapeptide) pyrophosphoryl-undecaprenol N-acetylglucosamine transferase (359 aa).

Residues 15–17 (TGG), Asn-127, Arg-166, Ser-191, Ile-245, 264–269 (ALTVSE), and Gln-290 contribute to the UDP-N-acetyl-alpha-D-glucosamine site.

Belongs to the glycosyltransferase 28 family. MurG subfamily.

Its subcellular location is the cell inner membrane. It catalyses the reaction di-trans,octa-cis-undecaprenyl diphospho-N-acetyl-alpha-D-muramoyl-L-alanyl-D-glutamyl-meso-2,6-diaminopimeloyl-D-alanyl-D-alanine + UDP-N-acetyl-alpha-D-glucosamine = di-trans,octa-cis-undecaprenyl diphospho-[N-acetyl-alpha-D-glucosaminyl-(1-&gt;4)]-N-acetyl-alpha-D-muramoyl-L-alanyl-D-glutamyl-meso-2,6-diaminopimeloyl-D-alanyl-D-alanine + UDP + H(+). Its pathway is cell wall biogenesis; peptidoglycan biosynthesis. Its function is as follows. Cell wall formation. Catalyzes the transfer of a GlcNAc subunit on undecaprenyl-pyrophosphoryl-MurNAc-pentapeptide (lipid intermediate I) to form undecaprenyl-pyrophosphoryl-MurNAc-(pentapeptide)GlcNAc (lipid intermediate II). This chain is UDP-N-acetylglucosamine--N-acetylmuramyl-(pentapeptide) pyrophosphoryl-undecaprenol N-acetylglucosamine transferase, found in Pseudomonas entomophila (strain L48).